The sequence spans 82 residues: Penaeidin-3i (82 aa).

Positions 1-19 (MRLVVCLVFLASFALVCQG) are cleaved as a signal peptide. Glutamine 20 is subject to Pyrrolidone carboxylic acid. Disulfide bonds link cysteine 55–cysteine 73 and cysteine 67–cysteine 74. Serine 81 is subject to Serine amide.

Belongs to the penaeidin family.

It is found in the cytoplasmic granule. Its function is as follows. Antibacterial and antifungal activity. Presents chitin-binding activity. This is Penaeidin-3i from Penaeus vannamei (Whiteleg shrimp).